A 267-amino-acid chain; its full sequence is Putative transcription factor Ovo-like 1 (267 aa).

C2H2-type zinc fingers lie at residues 118–140 (FTCR…MKCH), 146–168 (HLCT…VRTH), 174–197 (YKCS…KKIH), and 213–235 (YVCE…LKEH).

In terms of tissue distribution, expressed in fetal kidney, and also in adult pancreas and placenta. Not expressed in intestine, peripheral blood lymphocytes and ovary.

The protein localises to the nucleus. Putative transcription factor. Involved in hair formation and spermatogenesis. May function in the differentiation and/or maintenance of the urogenital system. In Homo sapiens (Human), this protein is Putative transcription factor Ovo-like 1 (OVOL1).